The primary structure comprises 393 residues: 1-deoxy-D-xylulose 5-phosphate reductoisomerase (393 aa).

Residues Thr-10, Gly-11, Ser-12, Ile-13, Arg-37, Gln-38, and Asn-124 each coordinate NADPH. Lys-125 serves as a coordination point for 1-deoxy-D-xylulose 5-phosphate. Glu-126 serves as a coordination point for NADPH. Asp-150 contacts Mn(2+). 1-deoxy-D-xylulose 5-phosphate is bound by residues Ser-151, Glu-152, Ser-179, and His-202. Glu-152 provides a ligand contact to Mn(2+). Gly-208 is a binding site for NADPH. 4 residues coordinate 1-deoxy-D-xylulose 5-phosphate: Ser-215, Asn-220, Lys-221, and Glu-224. Position 224 (Glu-224) interacts with Mn(2+).

Belongs to the DXR family. It depends on Mg(2+) as a cofactor. Requires Mn(2+) as cofactor.

It catalyses the reaction 2-C-methyl-D-erythritol 4-phosphate + NADP(+) = 1-deoxy-D-xylulose 5-phosphate + NADPH + H(+). It participates in isoprenoid biosynthesis; isopentenyl diphosphate biosynthesis via DXP pathway; isopentenyl diphosphate from 1-deoxy-D-xylulose 5-phosphate: step 1/6. Catalyzes the NADPH-dependent rearrangement and reduction of 1-deoxy-D-xylulose-5-phosphate (DXP) to 2-C-methyl-D-erythritol 4-phosphate (MEP). This Cupriavidus necator (strain ATCC 17699 / DSM 428 / KCTC 22496 / NCIMB 10442 / H16 / Stanier 337) (Ralstonia eutropha) protein is 1-deoxy-D-xylulose 5-phosphate reductoisomerase.